The chain runs to 318 residues: MANQDQAYLDLLKKIMTEGNDKNDRTGTGTRSLFGAQMRFDLSQGFPILTTKRVPFGLIKSELLWFLRGDTNIRFLLEHKNHIWDEWAFKNWVTSPEYQGPDMTDFGLRSQKDPGFKAVYDEEMQKFCQRILDDEAFAQKYGNLGDVYGAQWRHWGKRDGGFIDQIADVIEQIKTNPDSRRLIVTAWNPEDVPSSALPPCHVLFQFYVADGKLSLQLYQRSGDMFLGVPFNIASYSLLLSLIARETGLEVGEFVHTIGDAHIYKNHFAQVEEQLKRKPFDAPTLWLNPGKKKVADFEMADIKLVNYQHGSTIKAPVAV.

Residues Arg25 and 180–181 each bind dUMP; that span reads RR. Cys200 (nucleophile) is an active-site residue. DUMP contacts are provided by residues 220-223, Asn231, and 261-263; these read RSGD and HIY. Asp223 lines the (6R)-5,10-methylene-5,6,7,8-tetrahydrofolate pocket. (6R)-5,10-methylene-5,6,7,8-tetrahydrofolate is bound at residue Ala317.

Belongs to the thymidylate synthase family. Bacterial-type ThyA subfamily. Homodimer.

Its subcellular location is the cytoplasm. It carries out the reaction dUMP + (6R)-5,10-methylene-5,6,7,8-tetrahydrofolate = 7,8-dihydrofolate + dTMP. It participates in pyrimidine metabolism; dTTP biosynthesis. Its function is as follows. Catalyzes the reductive methylation of 2'-deoxyuridine-5'-monophosphate (dUMP) to 2'-deoxythymidine-5'-monophosphate (dTMP) while utilizing 5,10-methylenetetrahydrofolate (mTHF) as the methyl donor and reductant in the reaction, yielding dihydrofolate (DHF) as a by-product. This enzymatic reaction provides an intracellular de novo source of dTMP, an essential precursor for DNA biosynthesis. The protein is Thymidylate synthase of Lactobacillus delbrueckii subsp. bulgaricus (strain ATCC BAA-365 / Lb-18).